A 500-amino-acid chain; its full sequence is ADP,ATP carrier protein 5 (500 aa).

Transmembrane regions (helical) follow at residues 26–46, 62–82, 94–114, 149–169, 184–204, 224–244, 287–307, 328–348, 357–377, 381–401, and 469–489; these read LGKF…QNIL, IAGF…VIIY, IFYY…FVIY, YIVY…LLFW, FYTL…FLMM, ITLV…CCLL, LWLL…VEAV, LYIL…NNVM, AVIS…LIVF, ILSL…VSIG, and SISP…IYAV.

It belongs to the ADP/ATP translocase tlc family.

The protein resides in the cell membrane. In terms of biological role, provides the rickettsial cell with host ATP in exchange for rickettsial ADP. This is an obligate exchange system. This energy acquiring activity is an important component of rickettsial parasitism. The chain is ADP,ATP carrier protein 5 (tlcE) from Rickettsia typhi (strain ATCC VR-144 / Wilmington).